The chain runs to 170 residues: Lipoprotein signal peptidase (170 aa).

The next 4 helical transmembrane spans lie at 11–31, 41–61, 69–89, and 95–115; these read LGWLWLSVLVLVIDQVSKLHF, IVVIPDYFSWTLAYNTGAAFS, WQRWLFALIAIAVSAVLVVWL, and NETWLAIALALVLGGALGNLY. Residues aspartate 125 and aspartate 144 contribute to the active site. Residues 136 to 156 traverse the membrane as a helical segment; the sequence is YFPAFNFADSAITVGAVMLAL.

It belongs to the peptidase A8 family.

It is found in the cell inner membrane. The catalysed reaction is Release of signal peptides from bacterial membrane prolipoproteins. Hydrolyzes -Xaa-Yaa-Zaa-|-(S,diacylglyceryl)Cys-, in which Xaa is hydrophobic (preferably Leu), and Yaa (Ala or Ser) and Zaa (Gly or Ala) have small, neutral side chains.. Its pathway is protein modification; lipoprotein biosynthesis (signal peptide cleavage). This protein specifically catalyzes the removal of signal peptides from prolipoproteins. The polypeptide is Lipoprotein signal peptidase (Pseudomonas fluorescens (strain ATCC BAA-477 / NRRL B-23932 / Pf-5)).